The primary structure comprises 350 residues: Uroporphyrinogen decarboxylase (350 aa).

Residues 27–31 (RQAGR), Phe-46, Asp-76, Tyr-152, Ser-207, and His-321 each bind substrate.

This sequence belongs to the uroporphyrinogen decarboxylase family. In terms of assembly, homodimer.

The protein localises to the cytoplasm. It carries out the reaction uroporphyrinogen III + 4 H(+) = coproporphyrinogen III + 4 CO2. The protein operates within porphyrin-containing compound metabolism; protoporphyrin-IX biosynthesis; coproporphyrinogen-III from 5-aminolevulinate: step 4/4. Its function is as follows. Catalyzes the decarboxylation of four acetate groups of uroporphyrinogen-III to yield coproporphyrinogen-III. The polypeptide is Uroporphyrinogen decarboxylase (Listeria monocytogenes serotype 4a (strain HCC23)).